Here is a 186-residue protein sequence, read N- to C-terminus: Peptide deformylase (186 aa).

The Fe cation site is built by Cys-99 and His-141. The active site involves Glu-142. His-145 contacts Fe cation.

It belongs to the polypeptide deformylase family. Requires Fe(2+) as cofactor.

The enzyme catalyses N-terminal N-formyl-L-methionyl-[peptide] + H2O = N-terminal L-methionyl-[peptide] + formate. In terms of biological role, removes the formyl group from the N-terminal Met of newly synthesized proteins. Requires at least a dipeptide for an efficient rate of reaction. N-terminal L-methionine is a prerequisite for activity but the enzyme has broad specificity at other positions. The sequence is that of Peptide deformylase from Chlamydia caviae (strain ATCC VR-813 / DSM 19441 / 03DC25 / GPIC) (Chlamydophila caviae).